Here is a 354-residue protein sequence, read N- to C-terminus: Sulfate/thiosulfate import ATP-binding protein CysA (354 aa).

Positions 3–237 (IEVRGLSKRF…PATPFVYGFL (235 aa)) constitute an ABC transporter domain. ATP is bound at residue 35 to 42 (GPSGCGKT).

It belongs to the ABC transporter superfamily. Sulfate/tungstate importer (TC 3.A.1.6) family. In terms of assembly, the complex is composed of two ATP-binding proteins (CysA), two transmembrane proteins (CysT and CysW) and a solute-binding protein (CysP).

Its subcellular location is the cell inner membrane. It catalyses the reaction sulfate(out) + ATP + H2O = sulfate(in) + ADP + phosphate + H(+). The enzyme catalyses thiosulfate(out) + ATP + H2O = thiosulfate(in) + ADP + phosphate + H(+). Functionally, part of the ABC transporter complex CysAWTP involved in sulfate/thiosulfate import. Responsible for energy coupling to the transport system. The polypeptide is Sulfate/thiosulfate import ATP-binding protein CysA (Bordetella bronchiseptica (strain ATCC BAA-588 / NCTC 13252 / RB50) (Alcaligenes bronchisepticus)).